The following is a 493-amino-acid chain: Glutamyl-tRNA(Gln) amidotransferase subunit A (493 aa).

Residues Lys81 and Ser156 each act as charge relay system in the active site. The active-site Acyl-ester intermediate is Ser180.

It belongs to the amidase family. GatA subfamily. As to quaternary structure, heterotrimer of A, B and C subunits.

It catalyses the reaction L-glutamyl-tRNA(Gln) + L-glutamine + ATP + H2O = L-glutaminyl-tRNA(Gln) + L-glutamate + ADP + phosphate + H(+). Functionally, allows the formation of correctly charged Gln-tRNA(Gln) through the transamidation of misacylated Glu-tRNA(Gln) in organisms which lack glutaminyl-tRNA synthetase. The reaction takes place in the presence of glutamine and ATP through an activated gamma-phospho-Glu-tRNA(Gln). In Mycobacterium avium (strain 104), this protein is Glutamyl-tRNA(Gln) amidotransferase subunit A.